The primary structure comprises 125 residues: Nuclear envelope phosphatase-regulatory subunit 1 (125 aa).

Position 1 is an N-acetylmethionine (methionine 1). 2 helical membrane-spanning segments follow: residues 33 to 53 and 65 to 85; these read MLLIVVSVCTATGAWNWLIDP and WNHPFFTISCITLIGLFFAGI.

It belongs to the CNEP1R1 family. Interacts with CTDNEP1; the complex dephosphorylates LPIN1 and LPIN2.

Its subcellular location is the nucleus membrane. The protein localises to the cytoplasm. Functionally, forms with the serine/threonine protein phosphatase CTDNEP1 an active complex which dephosphorylates and may activate LPIN1 and LPIN2. LPIN1 and LPIN2 are phosphatidate phosphatases that catalyze the conversion of phosphatidic acid to diacylglycerol and control the metabolism of fatty acids at different levels. May indirectly modulate the lipid composition of nuclear and/or endoplasmic reticulum membranes and be required for proper nuclear membrane morphology and/or dynamics. May also indirectly regulate the production of lipid droplets and triacylglycerol. The polypeptide is Nuclear envelope phosphatase-regulatory subunit 1 (CNEP1R1) (Bos taurus (Bovine)).